The sequence spans 394 residues: HORMA domain-containing protein 1 (394 aa).

An HORMA domain is found at 24–226 (HQSLVLVKRL…TPFHIFKVKV (203 aa)). The disordered stretch occupies residues 252–394 (KILRDKDVED…RKFSEPKEHI (143 aa)). The span at 253–282 (ILRDKDVEDEQEHYTSDDLDMETKMEEQEK) shows a compositional bias: basic and acidic residues. 2 stretches are compositionally biased toward polar residues: residues 310–324 (LSIS…VNKT) and 343–352 (KMANGNQPVK). A compositionally biased stretch (basic and acidic residues) spans 362-374 (QHESGRRVLHHFD). S376 carries the phosphoserine modification. A Nuclear localization signal motif is present at residues 383–386 (KRRK).

As to quaternary structure, interacts with HORMAD2. Interacts with IHO1. In terms of processing, phosphorylated at Ser-377 in a SPO11-dependent manner.

The protein resides in the nucleus. The protein localises to the chromosome. Plays a key role in meiotic progression. Regulates 3 different functions during meiosis: ensures that sufficient numbers of processed DNA double-strand breaks (DSBs) are available for successful homology search by increasing the steady-state numbers of single-stranded DSB ends. Promotes synaptonemal-complex formation independently of its role in homology search. Plays a key role in the male mid-pachytene checkpoint and the female meiotic prophase checkpoint: required for efficient build-up of ATR activity on unsynapsed chromosome regions, a process believed to form the basis of meiotic silencing of unsynapsed chromatin (MSUC) and meiotic prophase quality control in both sexes. The protein is HORMA domain-containing protein 1 (HORMAD1) of Macaca fascicularis (Crab-eating macaque).